Reading from the N-terminus, the 604-residue chain is Aspartate--tRNA(Asp/Asn) ligase (604 aa).

E175 contributes to the L-aspartate binding site. The interval Q199–K202 is aspartate. L-aspartate contacts are provided by R221 and H456. Residue R221–E223 participates in ATP binding. ATP is bound at residue E496. Residue R503 participates in L-aspartate binding. G548 to R551 lines the ATP pocket.

The protein belongs to the class-II aminoacyl-tRNA synthetase family. Type 1 subfamily. Homodimer.

The protein localises to the cytoplasm. The enzyme catalyses tRNA(Asx) + L-aspartate + ATP = L-aspartyl-tRNA(Asx) + AMP + diphosphate. Functionally, aspartyl-tRNA synthetase with relaxed tRNA specificity since it is able to aspartylate not only its cognate tRNA(Asp) but also tRNA(Asn). Reaction proceeds in two steps: L-aspartate is first activated by ATP to form Asp-AMP and then transferred to the acceptor end of tRNA(Asp/Asn). This is Aspartate--tRNA(Asp/Asn) ligase from Methylobacterium nodulans (strain LMG 21967 / CNCM I-2342 / ORS 2060).